The primary structure comprises 147 residues: Large ribosomal subunit protein uL11 (147 aa).

This sequence belongs to the universal ribosomal protein uL11 family. In terms of assembly, part of the ribosomal stalk of the 50S ribosomal subunit. Interacts with L10 and the large rRNA to form the base of the stalk. L10 forms an elongated spine to which L12 dimers bind in a sequential fashion forming a multimeric L10(L12)X complex. In terms of processing, one or more lysine residues are methylated.

Forms part of the ribosomal stalk which helps the ribosome interact with GTP-bound translation factors. The polypeptide is Large ribosomal subunit protein uL11 (Corynebacterium aurimucosum (strain ATCC 700975 / DSM 44827 / CIP 107346 / CN-1) (Corynebacterium nigricans)).